The following is a 419-amino-acid chain: MSDTSKTNLSEQLFAPRMNTKETSNLVKIANLKSASVHNALDGDSESGWYRVLRRPQWIWQGIDPIEMEAILSRMASSTATRTSDELLDTVIGYKPGNWIYEWTQVGAKLQKKARAYVEAGQKEKAADTLLKASMYYSVAAYPHLKGDTLAAQAEIQANQSYRESMALTPHQIRTIDVKYEGKTFQAFIHLPRTDKLLPTVIVSGGLDSLQSDLWRLYRDYFGPAGFAMVTLDMPSVGHSSRWALTEDTSRLHQALVQQIRDVPWVDNTKVAMLGLRFGANAAIRLGFMEPTRLKTCISLGGAIHSMLTQPTMLDSMPRMYLDVIASRMGKHGVSKSSLTSHLPAWSLKNQGLLGRRKVDVPMLGISLKNDPVCREIDNQLIEKSSRGGKAITLPDTPLHDGYHRSMVTVIEWLKDKLA.

Belongs to the FrsA family.

It catalyses the reaction a carboxylic ester + H2O = an alcohol + a carboxylate + H(+). Functionally, catalyzes the hydrolysis of esters. The polypeptide is Esterase FrsA (Photobacterium profundum (strain SS9)).